The sequence spans 607 residues: NAD-dependent protein deacetylase sir-2.1 (607 aa).

Residues 1–68 are disordered; it reads MSRDSGNDSE…SVSSESWQNN (68 aa). A compositionally biased stretch (low complexity) spans 55–64; the sequence is ESTTSVSSES. The 274-residue stretch at 128–401 folds into the Deacetylase sirtuin-type domain; it reads KLTNYNSLAD…DSIMEQQGKT (274 aa). NAD(+) is bound by residues 153-172 and 237-240; these read GAGVSVSCGIPDFRSKDGIY and QNID. The Proton acceptor role is filled by His255. Cys263, Cys266, Cys287, and Cys290 together coordinate Zn(2+). Residues 327 to 329, 352 to 354, and Cys369 contribute to the NAD(+) site; these read GSS and NRE. Positions 426-453 are disordered; it reads EKRNDDSSDEPTLKKPRMSVADDSMDSE.

The protein belongs to the sirtuin family. Class I subfamily. Interacts with ftt-2 and par-5. Interacts with daf-16 following heat-shock, which causes daf-16 to accumulate in the nucleus. Interaction with daf-16 is promoted by ftt-2. Interacts with transcriptional coregulator hcf-1. Zn(2+) is required as a cofactor.

The protein resides in the nucleus. The protein localises to the cytoplasm. The enzyme catalyses N(6)-acetyl-L-lysyl-[protein] + NAD(+) + H2O = 2''-O-acetyl-ADP-D-ribose + nicotinamide + L-lysyl-[protein]. Its function is as follows. NAD-dependent deacetylase. Involved in metabolism, apoptosis, response to oxidative stress, response to DNA damage, and determination of lifespan. Required for a reduction of the 'Lys-16' acetylation of histone H4 (H4K16ac) on dosage-compensated X chromosomes in hermaphrodites. Plays a role in germ cell and somatic cell apoptosis in response to DNA damage. Functions upstream of daf-16/Forkhead box protein O in the Insulin/IGF-1-like signaling (IIS) mediated pathway, promoting daf-16 mediated transcriptional activation and increased lifespan. May also regulate lifespan independently of daf-16 by modulating the transcription of genes involved in the stress response of the endoplasmic reticulum (ER). Functions upstream of transcriptional coregulator hcf-1, perhaps acting independently of the IIS mediated pathway, to modulate lifespan and oxidative stress response. Acts upstream of the nicotinic acid metabolism pathway, which may be linked to the regulation of longevity. Plays a role in ascaroside-mediated longevity and stress resistance. This is NAD-dependent protein deacetylase sir-2.1 from Caenorhabditis elegans.